The chain runs to 96 residues: MSRSCELTGKGVQSGNNVSHANNKTKRKFLPNLCNVTLISDALGQRFRLRVSAAALRSVEHRGGLDAFLLKADENELSMRARLLRRQIVKKAAEAA.

Residues 1–22 (MSRSCELTGKGVQSGNNVSHAN) are compositionally biased toward polar residues. A disordered region spans residues 1–24 (MSRSCELTGKGVQSGNNVSHANNK).

The protein belongs to the bacterial ribosomal protein bL28 family.

This Rhizobium meliloti (strain 1021) (Ensifer meliloti) protein is Large ribosomal subunit protein bL28.